Reading from the N-terminus, the 142-residue chain is Prefoldin subunit alpha 1 (142 aa).

The protein belongs to the prefoldin subunit alpha family. Heterohexamer of two alpha and four beta subunits.

The protein resides in the cytoplasm. Molecular chaperone capable of stabilizing a range of proteins. Seems to fulfill an ATP-independent, HSP70-like function in archaeal de novo protein folding. The polypeptide is Prefoldin subunit alpha 1 (pfdA1) (Methanocaldococcus jannaschii (strain ATCC 43067 / DSM 2661 / JAL-1 / JCM 10045 / NBRC 100440) (Methanococcus jannaschii)).